The primary structure comprises 193 residues: Imidazoleglycerol-phosphate dehydratase (193 aa).

The protein belongs to the imidazoleglycerol-phosphate dehydratase family.

The protein localises to the cytoplasm. It catalyses the reaction D-erythro-1-(imidazol-4-yl)glycerol 3-phosphate = 3-(imidazol-4-yl)-2-oxopropyl phosphate + H2O. The protein operates within amino-acid biosynthesis; L-histidine biosynthesis; L-histidine from 5-phospho-alpha-D-ribose 1-diphosphate: step 6/9. This chain is Imidazoleglycerol-phosphate dehydratase, found in Saccharolobus islandicus (strain Y.G.57.14 / Yellowstone #1) (Sulfolobus islandicus).